The chain runs to 117 residues: Large ribosomal subunit protein uL24 (117 aa).

Belongs to the universal ribosomal protein uL24 family. As to quaternary structure, part of the 50S ribosomal subunit.

In terms of biological role, one of two assembly initiator proteins, it binds directly to the 5'-end of the 23S rRNA, where it nucleates assembly of the 50S subunit. Its function is as follows. One of the proteins that surrounds the polypeptide exit tunnel on the outside of the subunit. The polypeptide is Large ribosomal subunit protein uL24 (Nostoc punctiforme (strain ATCC 29133 / PCC 73102)).